We begin with the raw amino-acid sequence, 255 residues long: Hydroxyacylglutathione hydrolase (255 aa).

7 residues coordinate Zn(2+): H56, H58, D60, H61, H114, D133, and H171.

The protein belongs to the metallo-beta-lactamase superfamily. Glyoxalase II family. In terms of assembly, monomer. It depends on Zn(2+) as a cofactor.

It catalyses the reaction an S-(2-hydroxyacyl)glutathione + H2O = a 2-hydroxy carboxylate + glutathione + H(+). Its pathway is secondary metabolite metabolism; methylglyoxal degradation; (R)-lactate from methylglyoxal: step 2/2. In terms of biological role, thiolesterase that catalyzes the hydrolysis of S-D-lactoyl-glutathione to form glutathione and D-lactic acid. The chain is Hydroxyacylglutathione hydrolase from Ruegeria pomeroyi (strain ATCC 700808 / DSM 15171 / DSS-3) (Silicibacter pomeroyi).